The following is a 592-amino-acid chain: Solute carrier family 13 member 2 (592 aa).

Helical transmembrane passes span serine 13–serine 33, alanine 53–valine 73, serine 86–histidine 106, and leucine 114–phenylalanine 134. The span at serine 165–phenylalanine 177 shows a compositional bias: polar residues. Residues serine 165–glutamine 185 are disordered. 8 helical membrane passes run methionine 221 to alanine 241, methionine 274 to phenylalanine 294, proline 324 to phenylalanine 344, glycine 371 to leucine 391, proline 450 to phenylalanine 470, isoleucine 482 to methionine 502, leucine 511 to leucine 531, and isoleucine 545 to leucine 565.

This sequence belongs to the SLC13A/DASS transporter (TC 2.A.47) family. NADC subfamily. As to expression, expressed in kidney and intestine. In kidney expressed in the proximal tubule (at protein level).

It is found in the apical cell membrane. The enzyme catalyses succinate(out) + 3 Na(+)(out) = succinate(in) + 3 Na(+)(in). It carries out the reaction fumarate(out) + 3 Na(+)(out) = fumarate(in) + 3 Na(+)(in). It catalyses the reaction 2-oxoglutarate(out) + 3 Na(+)(out) = 2-oxoglutarate(in) + 3 Na(+)(in). Li(+) decreases succinate transport in the presence of Na(+), by competing at one of the three cation binding sites. Functionally, low-affinity sodium-dicarboxylate cotransporter, that mediates the entry of citric acid cycle intermediates, such as succinate, citrate, fumarate and alpha-ketoglutarate (2-oxoglutarate) into the small intestine and renal proximal tubule. Transports the dicarboxylate into the cell with a probable stoichiometry of 3 Na(+) for 1 divalent dicarboxylate, rendering the process electrogenic. Citrate is transported in protonated form as a divalent anion, rather than the trivalent form which is normally found in blood. Has a critical role in renal dicarboxylate transport. The chain is Solute carrier family 13 member 2 (SLC13A2) from Homo sapiens (Human).